We begin with the raw amino-acid sequence, 130 residues long: UPF0212 protein PF1486 (130 aa).

Belongs to the UPF0212 family.

The chain is UPF0212 protein PF1486 from Pyrococcus furiosus (strain ATCC 43587 / DSM 3638 / JCM 8422 / Vc1).